A 312-amino-acid polypeptide reads, in one-letter code: Ribosomal RNA small subunit methyltransferase H (312 aa).

S-adenosyl-L-methionine contacts are provided by residues 35–37 (GGH), D55, F79, D101, and Q108. Positions 286-306 (LKPSEHEVNENSRSRSSVLRV) are disordered. Positions 287-298 (KPSEHEVNENSR) are enriched in basic and acidic residues.

This sequence belongs to the methyltransferase superfamily. RsmH family.

Its subcellular location is the cytoplasm. The enzyme catalyses cytidine(1402) in 16S rRNA + S-adenosyl-L-methionine = N(4)-methylcytidine(1402) in 16S rRNA + S-adenosyl-L-homocysteine + H(+). Functionally, specifically methylates the N4 position of cytidine in position 1402 (C1402) of 16S rRNA. This Aeromonas hydrophila subsp. hydrophila (strain ATCC 7966 / DSM 30187 / BCRC 13018 / CCUG 14551 / JCM 1027 / KCTC 2358 / NCIMB 9240 / NCTC 8049) protein is Ribosomal RNA small subunit methyltransferase H.